The chain runs to 322 residues: MSKPGDYDAVRKDIIAQLKKPGYDDGSAGPVFVRLAWHSAGTYDLETDTGGSNGAGMRYEAEGGDPANAGLQHGRAFLEPVKEKHPWITYADLWTLAGVVAIEALGGPKVVWKPGRTDLVDDSKVPPRGRLPDATQGAEHLRAVFYRMGFNDQEIVALAGGHTLGRCHIDRSGFQGPWVNNPTRFSNQFFKLLLTLDWKPKTLPNGISQFVYVDPDAEEGDEPLMMLPTDIALKTDPAFRVWVDKYAADKDLFFDHFAKAFAKLMELGIKRDENDRVINADNVKGGYISAPKKSNHPTGPAKGAQGGCPVAASQGGCPRAKL.

Histidine 38 serves as the catalytic Proton acceptor. Heme b is bound at residue histidine 162. Tryptophan 178 acts as the Tryptophan radical intermediate in catalysis. A disordered region spans residues 288 to 322; sequence ISAPKKSNHPTGPAKGAQGGCPVAASQGGCPRAKL.

The protein belongs to the peroxidase family. Cytochrome c peroxidase subfamily. Requires heme b as cofactor.

Destroys radicals which are normally produced within the cells and which are toxic to biological systems. The chain is Putative heme-binding peroxidase from Aspergillus fumigatus (strain ATCC MYA-4609 / CBS 101355 / FGSC A1100 / Af293) (Neosartorya fumigata).